We begin with the raw amino-acid sequence, 203 residues long: Small ribosomal subunit protein uS4c (203 aa).

The tract at residues 17 to 39 (TLPGLTTKKSNKLNRPGKDGNTD) is disordered. In terms of domain architecture, S4 RNA-binding spans 92–164 (MRLDTLCFTL…IKNNQVREIP (73 aa)).

This sequence belongs to the universal ribosomal protein uS4 family. Part of the 30S ribosomal subunit. Contacts protein S5. The interaction surface between S4 and S5 is involved in control of translational fidelity.

It localises to the plastid. The protein localises to the chloroplast. In terms of biological role, one of the primary rRNA binding proteins, it binds directly to 16S rRNA where it nucleates assembly of the body of the 30S subunit. Its function is as follows. With S5 and S12 plays an important role in translational accuracy. The polypeptide is Small ribosomal subunit protein uS4c (rps4) (Phaeodactylum tricornutum (strain CCAP 1055/1)).